The following is a 78-amino-acid chain: UPF0291 protein Ldb1355 (78 aa).

The protein belongs to the UPF0291 family.

The protein resides in the cytoplasm. The protein is UPF0291 protein Ldb1355 of Lactobacillus delbrueckii subsp. bulgaricus (strain ATCC 11842 / DSM 20081 / BCRC 10696 / JCM 1002 / NBRC 13953 / NCIMB 11778 / NCTC 12712 / WDCM 00102 / Lb 14).